The following is a 206-amino-acid chain: Small ribosomal subunit protein uS4 (206 aa).

An S4 RNA-binding domain is found at 96-156; that stretch reads GRLDNVVYRM…EKAKKQSRVK (61 aa).

It belongs to the universal ribosomal protein uS4 family. As to quaternary structure, part of the 30S ribosomal subunit. Contacts protein S5. The interaction surface between S4 and S5 is involved in control of translational fidelity.

Functionally, one of the primary rRNA binding proteins, it binds directly to 16S rRNA where it nucleates assembly of the body of the 30S subunit. With S5 and S12 plays an important role in translational accuracy. This Salmonella agona (strain SL483) protein is Small ribosomal subunit protein uS4.